We begin with the raw amino-acid sequence, 410 residues long: LL-diaminopimelate aminotransferase (410 aa).

Residues Tyr-15 and Gly-42 each contribute to the substrate site. Residues Tyr-72, 108-109 (SK), Tyr-132, Asn-187, Tyr-218, and 246-248 (SFS) each bind pyridoxal 5'-phosphate. 3 residues coordinate substrate: Lys-109, Tyr-132, and Asn-187. Position 249 is an N6-(pyridoxal phosphate)lysine (Lys-249). Pyridoxal 5'-phosphate contacts are provided by Arg-257 and Asn-292. Substrate is bound by residues Asn-292 and Arg-388.

Belongs to the class-I pyridoxal-phosphate-dependent aminotransferase family. LL-diaminopimelate aminotransferase subfamily. As to quaternary structure, homodimer. Pyridoxal 5'-phosphate is required as a cofactor.

It carries out the reaction (2S,6S)-2,6-diaminopimelate + 2-oxoglutarate = (S)-2,3,4,5-tetrahydrodipicolinate + L-glutamate + H2O + H(+). It participates in amino-acid biosynthesis; L-lysine biosynthesis via DAP pathway; LL-2,6-diaminopimelate from (S)-tetrahydrodipicolinate (aminotransferase route): step 1/1. Its function is as follows. Involved in the synthesis of meso-diaminopimelate (m-DAP or DL-DAP), required for both lysine and peptidoglycan biosynthesis. Catalyzes the direct conversion of tetrahydrodipicolinate to LL-diaminopimelate. The sequence is that of LL-diaminopimelate aminotransferase from Geotalea daltonii (strain DSM 22248 / JCM 15807 / FRC-32) (Geobacter daltonii).